The chain runs to 295 residues: Pantothenate synthetase (295 aa).

Histidine 37 acts as the Proton donor in catalysis. Residue glutamine 61 coordinates (R)-pantoate. Glutamine 61 serves as a coordination point for beta-alanine. 154–157 (GRKD) contacts ATP. A (R)-pantoate-binding site is contributed by glutamine 160. Residues valine 183 and 191 to 194 (QSSR) each bind ATP.

This sequence belongs to the pantothenate synthetase family. In terms of assembly, homodimer.

It localises to the cytoplasm. It catalyses the reaction (R)-pantoate + beta-alanine + ATP = (R)-pantothenate + AMP + diphosphate + H(+). Its pathway is cofactor biosynthesis; (R)-pantothenate biosynthesis; (R)-pantothenate from (R)-pantoate and beta-alanine: step 1/1. Functionally, catalyzes the condensation of pantoate with beta-alanine in an ATP-dependent reaction via a pantoyl-adenylate intermediate. This chain is Pantothenate synthetase, found in Salinibacter ruber (strain DSM 13855 / M31).